The sequence spans 200 residues: Recombination protein RecR (200 aa).

The segment at 59 to 74 (CDICGNVCETSPCPVC) adopts a C4-type zinc-finger fold. Residues 82 to 177 (SVICVVEEPK…KVTRLASGLP (96 aa)) enclose the Toprim domain.

The protein belongs to the RecR family.

May play a role in DNA repair. It seems to be involved in an RecBC-independent recombinational process of DNA repair. It may act with RecF and RecO. In Bifidobacterium adolescentis (strain ATCC 15703 / DSM 20083 / NCTC 11814 / E194a), this protein is Recombination protein RecR.